We begin with the raw amino-acid sequence, 245 residues long: PF03932 family protein CutC (245 aa).

This sequence belongs to the CutC family.

It is found in the cytoplasm. The chain is PF03932 family protein CutC from Photobacterium profundum (strain SS9).